The sequence spans 446 residues: Maltoporin (446 aa).

A signal peptide spans Met-1–Ala-25.

Belongs to the porin LamB (TC 1.B.3) family. Homotrimer formed of three 18-stranded antiparallel beta-barrels, containing three independent channels.

It localises to the cell outer membrane. It carries out the reaction beta-maltose(in) = beta-maltose(out). Involved in the transport of maltose and maltodextrins. This Escherichia coli O7:K1 (strain IAI39 / ExPEC) protein is Maltoporin.